A 287-amino-acid polypeptide reads, in one-letter code: Pantothenate synthetase (287 aa).

Residue 30-37 participates in ATP binding; the sequence is MGALHEGH. The active-site Proton donor is the His-37. Gln-61 serves as a coordination point for (R)-pantoate. Gln-61 provides a ligand contact to beta-alanine. An ATP-binding site is contributed by 147-150; that stretch reads GEKD. Position 153 (Gln-153) interacts with (R)-pantoate. 184–187 lines the ATP pocket; the sequence is MSSR.

The protein belongs to the pantothenate synthetase family. As to quaternary structure, homodimer.

The protein localises to the cytoplasm. The catalysed reaction is (R)-pantoate + beta-alanine + ATP = (R)-pantothenate + AMP + diphosphate + H(+). The protein operates within cofactor biosynthesis; (R)-pantothenate biosynthesis; (R)-pantothenate from (R)-pantoate and beta-alanine: step 1/1. Its function is as follows. Catalyzes the condensation of pantoate with beta-alanine in an ATP-dependent reaction via a pantoyl-adenylate intermediate. This Granulibacter bethesdensis (strain ATCC BAA-1260 / CGDNIH1) protein is Pantothenate synthetase.